We begin with the raw amino-acid sequence, 310 residues long: Ribosomal RNA small subunit methyltransferase H (310 aa).

Residues 32-34 (GGH), D52, F79, D100, and Q107 contribute to the S-adenosyl-L-methionine site.

The protein belongs to the methyltransferase superfamily. RsmH family.

It is found in the cytoplasm. The enzyme catalyses cytidine(1402) in 16S rRNA + S-adenosyl-L-methionine = N(4)-methylcytidine(1402) in 16S rRNA + S-adenosyl-L-homocysteine + H(+). Functionally, specifically methylates the N4 position of cytidine in position 1402 (C1402) of 16S rRNA. In Bacillus cereus (strain ATCC 10987 / NRS 248), this protein is Ribosomal RNA small subunit methyltransferase H.